We begin with the raw amino-acid sequence, 477 residues long: Sucrose-6-phosphate hydrolase (477 aa).

Substrate is bound by residues 36-39 (WMND), Gln-55, Trp-63, 98-99 (FS), 160-161 (RD), Glu-215, and Trp-298. Asp-39 is a catalytic residue.

This sequence belongs to the glycosyl hydrolase 32 family.

Its subcellular location is the cytoplasm. It carries out the reaction Hydrolysis of terminal non-reducing beta-D-fructofuranoside residues in beta-D-fructofuranosides.. It functions in the pathway glycan biosynthesis; sucrose metabolism. In terms of biological role, enables the bacterium to metabolize sucrose as a sole carbon source. The sequence is that of Sucrose-6-phosphate hydrolase (cscA) from Escherichia coli.